The chain runs to 424 residues: Splicing factor 3B subunit 4 (424 aa).

Ala-2 is subject to N-acetylalanine. RRM domains lie at 13–91 (ATVY…KASA) and 100–179 (ANIF…YAFK). Tyr-56 is subject to Phosphotyrosine. The tract at residues 207-424 (PHQLFADAPP…RGPLRGPLPQ (218 aa)) is disordered. Low complexity predominate over residues 222 to 231 (NPVVSSLGSG). Pro residues predominate over residues 232–268 (LPPPGMPPPGSFPPPVPPPGALPPGIPPAMPPPPMPP). Low complexity-rich tracts occupy residues 269-280 (GAAGHGPPSAGT) and 303-323 (HPGM…GHPH). Composition is skewed to pro residues over residues 332–381 (QPPP…PLMP) and 388–424 (PPRP…PLPQ).

Belongs to the SF3B4 family. As to quaternary structure, component of the 17S U2 SnRNP complex, a ribonucleoprotein complex that contains small nuclear RNA (snRNA) U2 and a number of specific proteins. Part of the SF3B subcomplex of the 17S U2 SnRNP complex. SF3B associates with the splicing subcomplex SF3A and a 12S RNA unit to form the U2 small nuclear ribonucleoproteins complex (U2 snRNP). SF3B4 has been found in complex spliceosome 'B' and 'C' as well. Component of the minor (U12-type spliceosome) spliceosome. Found in a complex with PRMT9, SF3B2 and SF3B4.

The protein localises to the nucleus. In terms of biological role, component of the 17S U2 SnRNP complex of the spliceosome, a large ribonucleoprotein complex that removes introns from transcribed pre-mRNAs. The 17S U2 SnRNP complex (1) directly participates in early spliceosome assembly and (2) mediates recognition of the intron branch site during pre-mRNA splicing by promoting the selection of the pre-mRNA branch-site adenosine, the nucleophile for the first step of splicing. Within the 17S U2 SnRNP complex, SF3B4 is part of the SF3B subcomplex, which is required for 'A' complex assembly formed by the stable binding of U2 snRNP to the branchpoint sequence in pre-mRNA. Sequence independent binding of SF3A and SF3B subcomplexes upstream of the branch site is essential, it may anchor U2 snRNP to the pre-mRNA. May also be involved in the assembly of the 'E' complex. Also acts as a component of the minor spliceosome, which is involved in the splicing of U12-type introns in pre-mRNAs. This Homo sapiens (Human) protein is Splicing factor 3B subunit 4 (SF3B4).